A 152-amino-acid chain; its full sequence is uncharacterized protein (152 aa).

The protein belongs to the transposase 8 family.

This is an uncharacterized protein from Sinorhizobium fredii (strain NBRC 101917 / NGR234).